Consider the following 377-residue polypeptide: MNHSDTLSLSLELLQQPSVTPIDHTCQTIMADRLAKVGFHIEPMRFGDVDNLWARRGTEGPVFCFAGHTDVVPTGRLDAWNSDPFAPEIRDGKLYGRGSADMKTALAAMVVASERFVAKHPNHKGSIAFLITSDEEGPAVNGTVKVIETLEKRNEKITWCLVGEPSSTHKLGDIVKNGRRGSLNAVLKVQGKQGHVAYPHLARNPIHEASPALAELCQTVWDNGNEYFPATSFQISNIHAGTGATNVIPGALEVTFNFRYSTEVTAEQLKQRVHEILDKHGLQYEIVWNLSGLPFLTPVGELVNAAQTAILNVTGTETELSTSGGTSDGRFIAPTGAQVLELGVLNATIHQINEHVDVHDLDPLTDIYEQILENLLA.

His-68 is a Zn(2+) binding site. Residue Asp-70 is part of the active site. A Zn(2+)-binding site is contributed by Asp-101. The Proton acceptor role is filled by Glu-135. 3 residues coordinate Zn(2+): Glu-136, Glu-164, and His-350.

This sequence belongs to the peptidase M20A family. DapE subfamily. Homodimer. Requires Zn(2+) as cofactor. Co(2+) is required as a cofactor.

It carries out the reaction N-succinyl-(2S,6S)-2,6-diaminopimelate + H2O = (2S,6S)-2,6-diaminopimelate + succinate. Its pathway is amino-acid biosynthesis; L-lysine biosynthesis via DAP pathway; LL-2,6-diaminopimelate from (S)-tetrahydrodipicolinate (succinylase route): step 3/3. In terms of biological role, catalyzes the hydrolysis of N-succinyl-L,L-diaminopimelic acid (SDAP), forming succinate and LL-2,6-diaminopimelate (DAP), an intermediate involved in the bacterial biosynthesis of lysine and meso-diaminopimelic acid, an essential component of bacterial cell walls. The protein is Succinyl-diaminopimelate desuccinylase of Acinetobacter baumannii (strain AB307-0294).